The sequence spans 92 residues: Large ribosomal subunit protein bL27 (92 aa).

Positions 1 to 22 are disordered; it reads MAHTKAGGSTRNGRDSRGQRLG.

Belongs to the bacterial ribosomal protein bL27 family.

The chain is Large ribosomal subunit protein bL27 from Mycoplasmopsis agalactiae (strain NCTC 10123 / CIP 59.7 / PG2) (Mycoplasma agalactiae).